Consider the following 134-residue polypeptide: Global transcriptional regulator Spx (134 aa).

Cys10 and Cys13 are disulfide-bonded.

It belongs to the ArsC family. Spx subfamily. As to quaternary structure, interacts with the C-terminal domain of the alpha subunit of the RNAP.

Its subcellular location is the cytoplasm. Its function is as follows. Global transcriptional regulator that plays a key role in stress response and exerts either positive or negative regulation of genes. Acts by interacting with the C-terminal domain of the alpha subunit of the RNA polymerase (RNAP). This interaction can enhance binding of RNAP to the promoter region of target genes and stimulate their transcription, or block interaction of RNAP with activator. This is Global transcriptional regulator Spx from Streptococcus pyogenes serotype M3 (strain ATCC BAA-595 / MGAS315).